Consider the following 688-residue polypeptide: Phosphatidylinositol 4-phosphate 5-kinase type-1 gamma (688 aa).

Residues 48 to 71 (GQPGPGHGKKLGHRGVDASGETTY) are disordered. One can recognise a PIPK domain in the interval 75-443 (TSSTLKGAIQ…RFFKFMSSTV (369 aa)). 2 positions are modified to N6-acetyllysine: K265 and K268. R459 bears the Asymmetric dimethylarginine; alternate mark. R459 is modified (omega-N-methylarginine; alternate). The segment covering 525-534 (TTLSSTSLSI) has biased composition (low complexity). Disordered regions lie at residues 525–565 (TTLS…QEEL) and 592–629 (GAGV…EEDA). The residue at position 554 (S554) is a Phosphoserine. Low complexity predominate over residues 602–623 (ASAAATVEVDAASQASEPASQA). A Phosphotyrosine; by EGFR modification is found at Y635. At Y671 the chain carries Phosphotyrosine; by CSK. At S672 the chain carries Phosphoserine; by CDK5, MAPK1 and CDK1. Residues S682 and S686 each carry the phosphoserine modification. Phosphothreonine is present on T688.

As to quaternary structure, interacts with TLN1. Interacts with TLN2; interaction stimulates 1-phosphatidylinositol-4-phosphate 5-kinase activity. May compete with beta-integrins for the same binding site on TLN1 and TLN2. Interacts with ARF6; interaction stimulates 1-phosphatidylinositol-4-phosphate 5-kinase activity. Interacts with AP2B1. Interacts with AP2M1; phosphorylation of PIP5K1C by CSK disrupts the interaction; clathrin competes with PIP5K1C. Interacts with CDH1. Interacts with CSK. Interacts with PLCG1; interaction is abolished upon EGF stimulation. Interacts with LAPTM4B; promotes SNX5 association with LAPTM4B; kinase activity of PIP5K1C is required; interaction is regulated by phosphatidylinositol 4,5-bisphosphate generated by PIP5K1C. Phosphorylation on Ser-672 negatively regulates binding to TLN2 and is strongly stimulated in mitosis. Phosphorylation on Tyr-671 is necessary for targeting to focal adhesions. Phosphorylation on Ser-672 and Tyr-671 are mutually exclusive. Phosphorylated by SYK and CSK. Tyrosine phosphorylation is enhanced by PTK2 signaling. Phosphorylated at Tyr-635 upon EGF stimulation. Some studies suggest that phosphorylation on Tyr-671 enhances binding to tailins (TLN1 and TLN2); others that phosphorylation at Tyr-671 does not directly enhance binding to tailins (TLN1 and TLN2) but may act indirectly by inhibiting phosphorylation at Ser-672. Post-translationally, acetylation at Lys-265 and Lys-268 seems to decrease lipid kinase activity. Deacetylation of these sites by SIRT1 positively regulates the exocytosis of TSH-containing granules from pituitary cells.

The protein localises to the cell membrane. It is found in the endomembrane system. It localises to the cytoplasm. Its subcellular location is the cell junction. The protein resides in the focal adhesion. The protein localises to the adherens junction. It is found in the cell projection. It localises to the ruffle membrane. Its subcellular location is the phagocytic cup. The protein resides in the uropodium. The enzyme catalyses a 1,2-diacyl-sn-glycero-3-phospho-(1D-myo-inositol 4-phosphate) + ATP = a 1,2-diacyl-sn-glycero-3-phospho-(1D-myo-inositol-4,5-bisphosphate) + ADP + H(+). It catalyses the reaction 1-octadecanoyl-2-(5Z,8Z,11Z,14Z)-eicosatetraenoyl-sn-glycero-3-phospho-1D-myo-inositol 4-phosphate + ATP = 1-octadecanoyl-2-(5Z,8Z,11Z,14Z)-eicosatetraenoyl-sn-glycero-3-phospho-1D-myo-inositol 4,5-bisphosphate + ADP + H(+). It carries out the reaction 1-octadecanoyl-2-(9Z)-octadecenoyl-sn-glycero-3-phospho-1D-myo-inositol 4-phosphate + ATP = 1-octadecanoyl-2-(9Z)-octadecenoyl-sn-glycero-3-phospho-1D-myo-inositol 4,5-bisphosphate + ADP + H(+). The catalysed reaction is 1-octadecanoyl-2-(9Z)-octadecenoyl-sn-glycero-3-phospho-1D-myo-inositol + ATP = 1-octadecanoyl-2-(9Z)-octadecenoyl-sn-glycero-3-phospho-1D-myo-inositol 5-phosphate + ADP + H(+). The enzyme catalyses 1-octadecanoyl-2-(9Z,12Z)-octadecadienoyl-sn-glycero-3-phospho-1D-myo-inositol + ATP = 1-octadecanoyl-2-(9Z,12Z)-octadecadienoyl-sn-glycero-3-phospho-1D-myo-inositol 5-phosphate + ADP + H(+). It catalyses the reaction 1-octadecanoyl-2-(5Z,8Z,11Z,14Z-eicosatetraenoyl)-sn-glycero-3-phospho-(1D-myo-inositol) + ATP = 1-octadecanoyl-2-(5Z,8Z,11Z,14Z)-eicosatetraenoyl-sn-glycero-3-phospho-1D-myo-inositol 5-phosphate + ADP + H(+). It carries out the reaction 1,2-di-(9Z,12Z)-octadecadienoyl-sn-glycero-3-phospho-1D-myo-inositol + ATP = 1,2-di(9Z,12Z)-octadecadienoyl-sn-glycero-3-phospho-1D-myo-inositol 5-phosphate + ADP + H(+). Catalyzes the phosphorylation of phosphatidylinositol 4-phosphate (PtdIns(4)P/PI4P) to form phosphatidylinositol 4,5-bisphosphate (PtdIns(4,5)P2/PIP2), a lipid second messenger that regulates several cellular processes such as signal transduction, vesicle trafficking, actin cytoskeleton dynamics, cell adhesion, and cell motility. PtdIns(4,5)P2 can directly act as a second messenger or can be utilized as a precursor to generate other second messengers: inositol 1,4,5-trisphosphate (IP3), diacylglycerol (DAG) or phosphatidylinositol-3,4,5-trisphosphate (PtdIns(3,4,5)P3/PIP3). PIP5K1A-mediated phosphorylation of PtdIns(4)P is the predominant pathway for PtdIns(4,5)P2 synthesis. Together with PIP5K1A, is required for phagocytosis, both enzymes regulating different types of actin remodeling at sequential steps. Promotes particle attachment by generating the pool of PtdIns(4,5)P2 that induces controlled actin depolymerization to facilitate Fc-gamma-R clustering. Mediates RAC1-dependent reorganization of actin filaments. Required for synaptic vesicle transport. Controls the plasma membrane pool of PtdIns(4,5)P2 implicated in synaptic vesicle endocytosis and exocytosis. Plays a role in endocytosis mediated by clathrin and AP-2 (adaptor protein complex 2). Required for clathrin-coated pits assembly at the synapse. Participates in cell junction assembly. Modulates adherens junctions formation by facilitating CDH1/cadherin trafficking. Required for focal adhesion dynamics. Modulates the targeting of talins (TLN1 and TLN2) to the plasma membrane and their efficient assembly into focal adhesions. Regulates the interaction between talins (TLN1 and TLN2) and beta-integrins. Required for uropodium formation and retraction of the cell rear during directed migration. Has a role in growth factor-stimulated directional cell migration and adhesion. Required for talin assembly into nascent adhesions forming at the leading edge toward the direction of the growth factor. Negative regulator of T-cell activation and adhesion. Negatively regulates integrin alpha-L/beta-2 (LFA-1) polarization and adhesion induced by T-cell receptor. Together with PIP5K1A has a role during embryogenesis and together with PIP5K1B may have a role immediately after birth. The sequence is that of Phosphatidylinositol 4-phosphate 5-kinase type-1 gamma from Rattus norvegicus (Rat).